The chain runs to 189 residues: MEVILLERIGRLGQMGDTVKVKDGYARNFLLPQGKALRANEANKKKFEGQRAQLEAQNLERKNEAQAVADKLNGESFIVVRSAGETGQLYGSVSTRDIAEIITADGFTLHRNQVELNHPIKTIGLHEVSVSLHPEVQVKVMVNIARSTEEAERQAKGEDLTSIEAIYGIEEQPLSEEVFDDEDEAEDQA.

Belongs to the bacterial ribosomal protein bL9 family.

Functionally, binds to the 23S rRNA. This Brucella canis (strain ATCC 23365 / NCTC 10854 / RM-666) protein is Large ribosomal subunit protein bL9.